Reading from the N-terminus, the 377-residue chain is Mitochondrial pyrimidine nucleotide transporter RIM2 (377 aa).

3 Solcar repeats span residues 50-163, 173-262, and 286-375; these read VKPW…TKDM, ETPM…MKRL, and KEWC…VIRL. The next 6 membrane-spanning stretches (helical) occupy residues 53–73, 131–151, 179–199, 238–258, 286–306, and 347–368; these read WVHFVAGGIGGMAGAVVTCPF, GFRSLFKGLGPNLVGVIPARS, LMAAATAGWATATATNPIWLI, GLSASYLGSVEGILQWLLYEQ, KEWCQRSGSAGLAKFVASIAT, and MYSGLTPHLMRTVPNSIIMFGT.

Belongs to the mitochondrial carrier (TC 2.A.29) family.

It is found in the mitochondrion inner membrane. The enzyme catalyses 5-methyl-UTP(out) + UTP(in) = 5-methyl-UTP(in) + UTP(out). Mitochondrial transporter that imports/exports pyrimidine nucleotides into and from mitochondria. Selectively transports uridine, thymidine, and cytosine (deoxy)nucleoside di- and triphosphates by an antiport mechanism. Also transports, with lower efficiency, uridine, thymidine, and cytosine (deoxy)nucleoside monophosphates as well as guanosine (deoxy)nucleoside di- and triphosphate. May import (deoxy)nucleoside triphosphates in exchange for intramitochondrial (deoxy)nucleoside monophosphates, thus providing precursors necessary for de novo synthesis of mitochondrial DNA and RNA while exporting products of their catabolism. Mediates the transport of iron and other divalent metal ions like copper and zinc across the mitochondrial inner membrane in a pyrimidine nucleotide-dependent fashion. Catalyzes the co-import of pyrimidine nucleotides and divalent metal ions including ferrous iron. Participates in mitochondrial genome maintenance, regulation of mitochondrial membrane potential and mitochondrial respiration. The chain is Mitochondrial pyrimidine nucleotide transporter RIM2 (RIM2) from Saccharomyces cerevisiae (strain ATCC 204508 / S288c) (Baker's yeast).